The chain runs to 150 residues: MQVLTKRYPKNCLLTVMDRYSAVVRNMEQVVMIPSLLRDVQLSGPGGSVQDGAPDLYTYFTMLKSICVEVDHGLLPREEWQAKVAGNETSEAENDAAETEEAEEDRISEELDLEAQFHLHFCSLHHILTHLTRKAQEVTRKYQEMTGQVL.

The disordered stretch occupies residues 83-104 (KVAGNETSEAENDAAETEEAEE). A Phosphoserine modification is found at Ser-90. Positions 90–104 (SEAENDAAETEEAEE) are enriched in acidic residues.

The protein belongs to the SPOT14 family. In terms of assembly, homodimer. Heterodimer with MID1IP1. Interacts with THRB and PLAGL1. In terms of tissue distribution, mainly expressed in tissues that synthesize triglycerides.

The protein localises to the nucleus. Its subcellular location is the cytoplasm. In terms of biological role, plays a role in the regulation of lipogenesis, especially in lactating mammary gland. Important for the biosynthesis of triglycerides with medium-length fatty acid chains. May modulate lipogenesis by interacting with MID1IP1 and preventing its interaction with ACACA. May function as transcriptional coactivator. May modulate the transcription factor activity of THRB. This Mus musculus (Mouse) protein is Thyroid hormone-inducible hepatic protein (Thrsp).